The sequence spans 149 residues: 3-dehydroquinate dehydratase (149 aa).

Tyrosine 25 serves as the catalytic Proton acceptor. 3 residues coordinate substrate: asparagine 76, histidine 82, and aspartate 89. The active-site Proton donor is histidine 102. Substrate contacts are provided by residues 103–104 (LS) and arginine 113.

The protein belongs to the type-II 3-dehydroquinase family. As to quaternary structure, homododecamer.

It catalyses the reaction 3-dehydroquinate = 3-dehydroshikimate + H2O. The protein operates within metabolic intermediate biosynthesis; chorismate biosynthesis; chorismate from D-erythrose 4-phosphate and phosphoenolpyruvate: step 3/7. Catalyzes a trans-dehydration via an enolate intermediate. The polypeptide is 3-dehydroquinate dehydratase (Acaryochloris marina (strain MBIC 11017)).